A 55-amino-acid polypeptide reads, in one-letter code: Ferredoxin (55 aa).

2 consecutive 4Fe-4S ferredoxin-type domains span residues 2 to 26 (YKIT…ISEG) and 27 to 55 (SIYE…VPED). The [4Fe-4S] cluster site is built by Cys8, Cys11, Cys14, Cys18, Cys36, Cys39, Cys42, and Cys46.

It depends on [4Fe-4S] cluster as a cofactor.

In terms of biological role, ferredoxins are iron-sulfur proteins that transfer electrons in a wide variety of metabolic reactions. The chain is Ferredoxin from Butyribacterium methylotrophicum.